A 204-amino-acid chain; its full sequence is 3-isopropylmalate dehydratase small subunit (204 aa).

It belongs to the LeuD family. LeuD type 1 subfamily. In terms of assembly, heterodimer of LeuC and LeuD.

The catalysed reaction is (2R,3S)-3-isopropylmalate = (2S)-2-isopropylmalate. The protein operates within amino-acid biosynthesis; L-leucine biosynthesis; L-leucine from 3-methyl-2-oxobutanoate: step 2/4. Functionally, catalyzes the isomerization between 2-isopropylmalate and 3-isopropylmalate, via the formation of 2-isopropylmaleate. This is 3-isopropylmalate dehydratase small subunit from Vesicomyosocius okutanii subsp. Calyptogena okutanii (strain HA).